Here is a 116-residue protein sequence, read N- to C-terminus: Ig heavy chain V-A1 region BS-5 (116 aa).

Pyrrolidone carboxylic acid is present on Gln1. The Ig-like domain occupies 1–107 (QSVEESGGRL…LVHLAFVDVW (107 aa)).

The protein is Ig heavy chain V-A1 region BS-5 of Oryctolagus cuniculus (Rabbit).